Here is a 302-residue protein sequence, read N- to C-terminus: MDSLNSSYPQSAMATYSDLLDLAAQQQPHLSGLERLWWAHYAYWDNNIVATATGIITFLAHEIIYFSRCLPWIIADSLPSIFLKYKIQDQKPPPSAAEQWACTKYILLIHFVVELPLIVLFHPMMELCGLSFTIPFPDLRTLTAQIIIFFLLEDTYHYWLHRAMHWGPLYRSIHRIHHQYAAPFGLTAEYASPWETLLLGLGTIGPPLLLALMDCNVHLVTVLAWVTLRQFQAIDSHSGYDFPWSLRRILPFWGGADWHDDHHRYFWGNYSSSFRHWDVLMGTVAGPEAREKRRAEREKRQA.

The N-linked (GlcNAc...) asparagine glycan is linked to Asn-5. 3 consecutive transmembrane segments (helical) span residues 47 to 67 (NIVATATGIITFLAHEIIYFS), 105 to 125 (YILLIHFVVELPLIVLFHPMM), and 132 to 152 (FTIPFPDLRTLTAQIIIFFLL). Positions 147–283 (IIFFLLEDTY…FRHWDVLMGT (137 aa)) constitute a Fatty acid hydroxylase domain. Residues 161–165 (HRAMH) carry the Histidine box-1 motif. Residues 174–178 (HRIHH) carry the Histidine box-2 motif. Residues 193–213 (PWETLLLGLGTIGPPLLLALM) form a helical membrane-spanning segment. A Histidine box-3 motif is present at residues 258 to 264 (WHDDHHR). The N-linked (GlcNAc...) asparagine glycan is linked to Asn-269.

This sequence belongs to the sterol desaturase family. It depends on Fe cation as a cofactor.

The protein resides in the endoplasmic reticulum membrane. Its pathway is steroid metabolism; ergosterol biosynthesis. In terms of biological role, sterol-C4-methyl oxidase; part of the third module of ergosterol biosynthesis pathway that includes the late steps of the pathway. Erg25A is a catalytic component of the C-4 demethylation complex that catalyzes the conversion of 4,4-dimethylfecosterol into fecosterol via 4-methylfecosterol. The third module or late pathway involves the ergosterol synthesis itself through consecutive reactions that mainly occur in the endoplasmic reticulum (ER) membrane. Firstly, the squalene synthase erg9 catalyzes the condensation of 2 farnesyl pyrophosphate moieties to form squalene, which is the precursor of all steroids. Squalene synthase is crucial for balancing the incorporation of farnesyl diphosphate (FPP) into sterol and nonsterol isoprene synthesis. Secondly, squalene is converted into lanosterol by the consecutive action of the squalene epoxidase erg1 and the lanosterol synthase erg7. Then, the delta(24)-sterol C-methyltransferase erg6 methylates lanosterol at C-24 to produce eburicol. Eburicol is the substrate of the sterol 14-alpha demethylase encoded by cyp51A and cyp51B, to yield 4,4,24-trimethyl ergosta-8,14,24(28)-trienol. The C-14 reductase erg24 then reduces the C14=C15 double bond which leads to 4,4-dimethylfecosterol. A sequence of further demethylations at C-4, involving the C-4 demethylation complex containing the C-4 methylsterol oxidases erg25A or erg25B, the sterol-4-alpha-carboxylate 3-dehydrogenase erg26 and the 3-keto-steroid reductase erg27, leads to the production of fecosterol via 4-methylfecosterol. The C-8 sterol isomerase erg2 then catalyzes the reaction which results in unsaturation at C-7 in the B ring of sterols and thus converts fecosterol to episterol. The sterol-C5-desaturase erg3B then catalyzes the introduction of a C-5 double bond in the B ring to produce 5-dehydroepisterol. The 2 other sterol-C5-desaturases, erg3A and erg3C, seem to be less important in ergosterol biosynthesis. The C-22 sterol desaturase erg5 further converts 5-dehydroepisterol into ergosta-5,7,22,24(28)-tetraen-3beta-ol by forming the C-22(23) double bond in the sterol side chain. Finally, ergosta-5,7,22,24(28)-tetraen-3beta-ol is substrate of the C-24(28) sterol reductases erg4A and erg4B to produce ergosterol. Possible alternative sterol biosynthetic pathways might exist from fecosterol to ergosterol, depending on the activities of the erg3 isoforms. This Aspergillus fumigatus (strain ATCC MYA-4609 / CBS 101355 / FGSC A1100 / Af293) (Neosartorya fumigata) protein is Methylsterol monooxygenase erg25A.